A 448-amino-acid chain; its full sequence is Probable glycine dehydrogenase (decarboxylating) subunit 1 (448 aa).

Belongs to the GcvP family. N-terminal subunit subfamily. The glycine cleavage system is composed of four proteins: P, T, L and H. In this organism, the P 'protein' is a heterodimer of two subunits.

The enzyme catalyses N(6)-[(R)-lipoyl]-L-lysyl-[glycine-cleavage complex H protein] + glycine + H(+) = N(6)-[(R)-S(8)-aminomethyldihydrolipoyl]-L-lysyl-[glycine-cleavage complex H protein] + CO2. Its function is as follows. The glycine cleavage system catalyzes the degradation of glycine. The P protein binds the alpha-amino group of glycine through its pyridoxal phosphate cofactor; CO(2) is released and the remaining methylamine moiety is then transferred to the lipoamide cofactor of the H protein. This Staphylococcus aureus (strain COL) protein is Probable glycine dehydrogenase (decarboxylating) subunit 1.